The primary structure comprises 161 residues: N5-carboxyaminoimidazole ribonucleotide mutase (161 aa).

Residues S9, D12, and R39 each coordinate substrate.

The protein belongs to the AIR carboxylase family. Class I subfamily.

The enzyme catalyses 5-carboxyamino-1-(5-phospho-D-ribosyl)imidazole + H(+) = 5-amino-1-(5-phospho-D-ribosyl)imidazole-4-carboxylate. Its pathway is purine metabolism; IMP biosynthesis via de novo pathway; 5-amino-1-(5-phospho-D-ribosyl)imidazole-4-carboxylate from 5-amino-1-(5-phospho-D-ribosyl)imidazole (N5-CAIR route): step 2/2. Functionally, catalyzes the conversion of N5-carboxyaminoimidazole ribonucleotide (N5-CAIR) to 4-carboxy-5-aminoimidazole ribonucleotide (CAIR). In Vibrio vulnificus (strain CMCP6), this protein is N5-carboxyaminoimidazole ribonucleotide mutase.